Reading from the N-terminus, the 695-residue chain is Methionine synthase reductase (695 aa).

Residues 4–147 (FLLLYATQRG…VVEPWINGLW (144 aa)) enclose the Flavodoxin-like domain. Residues 10 to 14 (TQRGQ) and 93 to 124 (LLGL…QRFY) each bind FMN. Positions 166-245 (TLTMASHASR…ASLNIPSLPP (80 aa)) are hinge. A phosphoserine mark is found at S171 and S187. The FAD-binding FR-type domain occupies 269–531 (DPVFHVPVSK…PRTTNSFHLP (263 aa)). Residue K289 coordinates NADP(+). FAD is bound by residues 449–452 (RPYS) and 485–488 (GVCT). Residues 608–609 (SR), 622–624 (YVQ), and D657 each bind NADP(+). Residue W695 coordinates FAD.

In terms of assembly, forms a multiprotein complex with MMACHC, MMADHC and MTR. Requires FAD as cofactor. It depends on FMN as a cofactor.

The protein localises to the cytoplasm. The catalysed reaction is 2 methylcob(III)alamin-[methionine synthase] + 2 S-adenosyl-L-homocysteine + NADP(+) + H(+) = 2 cob(II)alamin-[methionine synthase] + 2 S-adenosyl-L-methionine + NADPH. The enzyme catalyses 2 cob(II)alamin + A + 2 H2O + 2 H(+) = 2 aquacob(III)alamin + AH2. Its function is as follows. Key enzyme in methionine and folate homeostasis responsible for the reactivation of methionine synthase (MTR/MS) activity by catalyzing the reductive methylation of MTR-bound cob(II)alamin. Cobalamin (vitamin B12) forms a complex with MTR to serve as an intermediary in methyl transfer reactions that cycles between MTR-bound methylcob(III)alamin and MTR bound-cob(I)alamin forms, and occasional oxidative escape of the cob(I)alamin intermediate during the catalytic cycle leads to the inactive cob(II)alamin species. The processing of cobalamin in the cytosol occurs in a multiprotein complex composed of at least MMACHC, MMADHC, MTRR and MTR which may contribute to shuttle safely and efficiently cobalamin towards MTR in order to produce methionine. Also necessary for the utilization of methyl groups from the folate cycle, thereby affecting transgenerational epigenetic inheritance. Also acts as a molecular chaperone for methionine synthase by stabilizing apoMTR and incorporating methylcob(III)alamin into apoMTR to form the holoenzyme. Also serves as an aquacob(III)alamin reductase by reducing aquacob(III)alamin to cob(II)alamin; this reduction leads to stimulation of the conversion of apoMTR and aquacob(III)alamin to MTR holoenzyme. This chain is Methionine synthase reductase (MTRR), found in Bos taurus (Bovine).